The primary structure comprises 414 residues: Glyceraldehyde-3-phosphate dehydrogenase, chloroplastic (414 aa).

The N-terminal 76 residues, 1–76 (MAFVAPVATV…GIVAATFGPT (76 aa)), are a transit peptide targeting the chloroplast. Residues 88–89 (RI), Asp112, and Arg156 contribute to the NADP(+) site. D-glyceraldehyde 3-phosphate-binding positions include 230–232 (SCT), Thr261, Arg276, 289–290 (TG), and Arg312. The Nucleophile role is filled by Cys231. Asn394 is an NADP(+) binding site.

This sequence belongs to the glyceraldehyde-3-phosphate dehydrogenase family. As to quaternary structure, homotetramer.

Its subcellular location is the plastid. The protein localises to the chloroplast. The catalysed reaction is D-glyceraldehyde 3-phosphate + phosphate + NADP(+) = (2R)-3-phospho-glyceroyl phosphate + NADPH + H(+). It participates in carbohydrate biosynthesis; Calvin cycle. This is Glyceraldehyde-3-phosphate dehydrogenase, chloroplastic (GAPA) from Chondrus crispus (Carrageen Irish moss).